The following is a 476-amino-acid chain: Aspartyl/glutamyl-tRNA(Asn/Gln) amidotransferase subunit B (476 aa).

It belongs to the GatB/GatE family. GatB subfamily. As to quaternary structure, heterotrimer of A, B and C subunits.

The catalysed reaction is L-glutamyl-tRNA(Gln) + L-glutamine + ATP + H2O = L-glutaminyl-tRNA(Gln) + L-glutamate + ADP + phosphate + H(+). It carries out the reaction L-aspartyl-tRNA(Asn) + L-glutamine + ATP + H2O = L-asparaginyl-tRNA(Asn) + L-glutamate + ADP + phosphate + 2 H(+). Allows the formation of correctly charged Asn-tRNA(Asn) or Gln-tRNA(Gln) through the transamidation of misacylated Asp-tRNA(Asn) or Glu-tRNA(Gln) in organisms which lack either or both of asparaginyl-tRNA or glutaminyl-tRNA synthetases. The reaction takes place in the presence of glutamine and ATP through an activated phospho-Asp-tRNA(Asn) or phospho-Glu-tRNA(Gln). The protein is Aspartyl/glutamyl-tRNA(Asn/Gln) amidotransferase subunit B of Lactobacillus delbrueckii subsp. bulgaricus (strain ATCC 11842 / DSM 20081 / BCRC 10696 / JCM 1002 / NBRC 13953 / NCIMB 11778 / NCTC 12712 / WDCM 00102 / Lb 14).